The primary structure comprises 313 residues: MTRDELKQKRIGVLMGGLSAERDVSLKSGMAVHQALLAMGYDSTALDVRHNVALILREEKIDLAFIALHGRYGEDGCIQGLLELMQIPYTGSGVLASALAMHKLYSKQAFAAAGLTITPYATVRQGDRCNAEQLPFGLPVVVKPVQEGSSVGVTIVKKPEDLQAALDEAFRYDTLVLVEKYIKGQEVQVGILANQPIGAIEIVPKNEFYDFEAKYSDGMAEHIFPARLAEPLYQKVQQQGLQAHQALGCDGYCRVDFLVTENGDCYLLEVNTLPGMTALSLLPEIAQKGAGLSFEALVEQIACSAALKTGQAG.

Residues 107 to 303 enclose the ATP-grasp domain; that stretch reads KQAFAAAGLT…FEALVEQIAC (197 aa). Residue 135 to 188 coordinates ATP; it reads PFGLPVVVKPVQEGSSVGVTIVKKPEDLQAALDEAFRYDTLVLVEKYIKGQEVQ. The Mg(2+) site is built by D256, E269, and N271.

This sequence belongs to the D-alanine--D-alanine ligase family. It depends on Mg(2+) as a cofactor. The cofactor is Mn(2+).

It localises to the cytoplasm. It catalyses the reaction 2 D-alanine + ATP = D-alanyl-D-alanine + ADP + phosphate + H(+). Its pathway is cell wall biogenesis; peptidoglycan biosynthesis. In terms of biological role, cell wall formation. This Trichlorobacter lovleyi (strain ATCC BAA-1151 / DSM 17278 / SZ) (Geobacter lovleyi) protein is D-alanine--D-alanine ligase.